Reading from the N-terminus, the 383-residue chain is uncharacterized protein (383 aa).

[4Fe-4S] cluster is bound by residues Cys12, Cys18, Cys21, and Cys88. S-adenosyl-L-methionine contacts are provided by Gln219, Phe246, Glu267, and Asp314. The Nucleophile role is filled by Cys341.

Belongs to the class I-like SAM-binding methyltransferase superfamily. RNA M5U methyltransferase family.

This is an uncharacterized protein from Protochlamydia amoebophila (strain UWE25).